Here is a 1446-residue protein sequence, read N- to C-terminus: ABC transporter G family member 53 (1446 aa).

The ABC transporter 1 domain occupies 153 to 426; that stretch reads ANTLHITPNR…FESVGFKCPE (274 aa). 186–193 is a binding site for ATP; it reads GPPGAGKT. The region spanning 504–717 is the ABC transmembrane type-2 1 domain; the sequence is ELLKANIDRE…AQNAISVNEF (214 aa). The next 6 membrane-spanning stretches (helical) occupy residues 523 to 543, 555 to 575, 610 to 630, 641 to 661, 666 to 686, and 752 to 772; these read VYIF…TVFI, GGIY…NGLA, TPLS…VIGF, FLLL…IAGF, VVAS…GGFI, and IGVG…TICL. One can recognise an ABC transporter 2 domain in the interval 849-1101; sequence ITFEDIRYSV…ELIRYFESIE (253 aa). 894 to 901 is an ATP binding site; the sequence is GVSGAGKT. The ABC transmembrane type-2 2 domain maps to 1174–1388; the sequence is TQCLACLWKQ…TLYGLVTSQF (215 aa). The next 7 helical transmembrane spans lie at 1195–1215, 1225–1242, 1281–1301, 1308–1328, 1338–1358, 1363–1383, and 1415–1435; these read AVKY…FWGV, LFNA…MGVQ, LPYI…MIGF, FFWY…YGMM, VASV…GFII, IPIW…LYGL, and FLWV…FLFG.

This sequence belongs to the ABC transporter superfamily. ABCG family. PDR (TC 3.A.1.205) subfamily.

It localises to the membrane. In terms of biological role, may be a general defense protein. The chain is ABC transporter G family member 53 from Oryza sativa subsp. japonica (Rice).